The primary structure comprises 38 residues: Toxin Bcg III 31.16 (38 aa).

3 cysteine pairs are disulfide-bonded: Cys-4–Cys-37, Cys-6–Cys-30, and Cys-20–Cys-38.

It belongs to the sea anemone type 3 (BDS) potassium channel toxin family.

The protein resides in the secreted. It is found in the nematocyst. Functionally, possible modulator of crustacean voltage-gated sodium channels (Nav). The chain is Toxin Bcg III 31.16 from Bunodosoma cangicum (Sea anemone).